A 919-amino-acid chain; its full sequence is Glutamate receptor ionotropic, kainate 3 (919 aa).

Residues 1–31 form the signal peptide; that stretch reads MTAPWRRLRSLVWEYWAGFLVCAFWIPDSRG. Residues 32–563 are Extracellular-facing; it reads MPHVIRIGGI…VFSFLNPLSP (532 aa). N70, N76, N278, N381, N415, N426, and N433 each carry an N-linked (GlcNAc...) asparagine glycan. A disulfide bond links C99 and C350. P518, T520, and R525 together coordinate L-glutamate. N-linked (GlcNAc...) asparagine glycans are attached at residues N548 and N551. The helical transmembrane segment at 564–584 threads the bilayer; sequence DIWMYVLLAYLGVSCVLFVIA. At 585–636 the chain is on the cytoplasmic side; it reads RFSPYEWYDAHPCNPGSEVVENNFTLLNSFWFGMGSLMQQGSELMPKALSTR. Residues 637–657 traverse the membrane as a helical segment; it reads IIGGIWWFFTLIIISSYTANL. Residues 658–820 are Extracellular-facing; it reads AAFLTVERME…KEASALGIQK (163 aa). 3 residues coordinate L-glutamate: A691, T692, and E739. N752 carries an N-linked (GlcNAc...) asparagine glycan. A helical transmembrane segment spans residues 821 to 841; sequence IGGIFIVLAAGLVLSVLVAVG. Topologically, residues 842–919 are cytoplasmic; the sequence is EFIYKLRKTA…CSTSLAPVFP (78 aa). At S869 the chain carries Phosphoserine. Residue K887 forms a Glycyl lysine isopeptide (Lys-Gly) (interchain with G-Cter in SUMO1) linkage.

It belongs to the glutamate-gated ion channel (TC 1.A.10.1) family. GRIK3 subfamily. In terms of assembly, homotetramer, and heterotetramer with either GRIK4 or GRIK5. Can form functional heteromeric receptors with GRIK2. Interacts with PRKCABP. Interacts with NETO2. In terms of tissue distribution, detected in whole brain, cerebellum, brain cortex and hippocampus.

The protein resides in the cell membrane. It localises to the postsynaptic cell membrane. It catalyses the reaction Ca(2+)(in) = Ca(2+)(out). Its activity is regulated as follows. Glutamate-gated receptor activity inhibited by spermine. Functionally, ionotropic glutamate receptor that functions as a cation-permeable ligand-gated ion channel, gated by L-glutamate and the glutamatergic agonist kainic acid. Binding of the excitatory neurotransmitter L-glutamate induces a conformation change, leading to the opening of the cation channel, and thereby converts the chemical signal to an electrical impulse. The receptor then desensitizes rapidly and enters a transient inactive state, characterized by the presence of bound agonist. In association with GRIK2, involved in presynaptic facilitation of glutamate release at hippocampal mossy fiber synapses. This chain is Glutamate receptor ionotropic, kainate 3 (Grik3), found in Mus musculus (Mouse).